A 115-amino-acid chain; its full sequence is Large ribosomal subunit protein bL20 (115 aa).

The protein belongs to the bacterial ribosomal protein bL20 family.

Functionally, binds directly to 23S ribosomal RNA and is necessary for the in vitro assembly process of the 50S ribosomal subunit. It is not involved in the protein synthesizing functions of that subunit. This Chlorobium luteolum (strain DSM 273 / BCRC 81028 / 2530) (Pelodictyon luteolum) protein is Large ribosomal subunit protein bL20.